The primary structure comprises 279 residues: Shikimate dehydrogenase (NADP(+)) (279 aa).

Shikimate is bound by residues 14–16 (SIS) and Thr-63. The Proton acceptor role is filled by Lys-67. Glu-79 is a binding site for NADP(+). Residues Asn-88 and Asp-103 each contribute to the shikimate site. Residues 127–131 (GAGGA), 151–156 (NRTYEK), and Met-219 contribute to the NADP(+) site. Residue Tyr-221 participates in shikimate binding. Gly-242 is an NADP(+) binding site.

The protein belongs to the shikimate dehydrogenase family. Homodimer.

It carries out the reaction shikimate + NADP(+) = 3-dehydroshikimate + NADPH + H(+). Its pathway is metabolic intermediate biosynthesis; chorismate biosynthesis; chorismate from D-erythrose 4-phosphate and phosphoenolpyruvate: step 4/7. Its function is as follows. Involved in the biosynthesis of the chorismate, which leads to the biosynthesis of aromatic amino acids. Catalyzes the reversible NADPH linked reduction of 3-dehydroshikimate (DHSA) to yield shikimate (SA). This Caldicellulosiruptor saccharolyticus (strain ATCC 43494 / DSM 8903 / Tp8T 6331) protein is Shikimate dehydrogenase (NADP(+)).